We begin with the raw amino-acid sequence, 95 residues long: Aspartyl/glutamyl-tRNA(Asn/Gln) amidotransferase subunit C (95 aa).

Belongs to the GatC family. As to quaternary structure, heterotrimer of A, B and C subunits.

It catalyses the reaction L-glutamyl-tRNA(Gln) + L-glutamine + ATP + H2O = L-glutaminyl-tRNA(Gln) + L-glutamate + ADP + phosphate + H(+). The enzyme catalyses L-aspartyl-tRNA(Asn) + L-glutamine + ATP + H2O = L-asparaginyl-tRNA(Asn) + L-glutamate + ADP + phosphate + 2 H(+). Allows the formation of correctly charged Asn-tRNA(Asn) or Gln-tRNA(Gln) through the transamidation of misacylated Asp-tRNA(Asn) or Glu-tRNA(Gln) in organisms which lack either or both of asparaginyl-tRNA or glutaminyl-tRNA synthetases. The reaction takes place in the presence of glutamine and ATP through an activated phospho-Asp-tRNA(Asn) or phospho-Glu-tRNA(Gln). The polypeptide is Aspartyl/glutamyl-tRNA(Asn/Gln) amidotransferase subunit C (Chelativorans sp. (strain BNC1)).